We begin with the raw amino-acid sequence, 173 residues long: Superoxide dismutase [Cu-Zn] (173 aa).

The first 19 residues, 1–19, serve as a signal peptide directing secretion; it reads MKSLFIASTMVLMAFPAFA. Cu cation-binding residues include His67, His69, and His92. A disulfide bond links Cys74 and Cys169. His92, His101, His109, and Asp112 together coordinate Zn(2+). Position 147 (His147) interacts with Cu cation.

Belongs to the Cu-Zn superoxide dismutase family. As to quaternary structure, homodimer. The cofactor is Cu cation. It depends on Zn(2+) as a cofactor.

It localises to the periplasm. The catalysed reaction is 2 superoxide + 2 H(+) = H2O2 + O2. Its function is as follows. Destroys radicals which are normally produced within the cells and which are toxic to biological systems. This Brucella abortus biovar 1 (strain 9-941) protein is Superoxide dismutase [Cu-Zn] (sodC).